A 99-amino-acid chain; its full sequence is Small ribosomal subunit protein bS6 (99 aa).

It belongs to the bacterial ribosomal protein bS6 family.

Its function is as follows. Binds together with bS18 to 16S ribosomal RNA. The polypeptide is Small ribosomal subunit protein bS6 (Lactiplantibacillus plantarum (strain ATCC BAA-793 / NCIMB 8826 / WCFS1) (Lactobacillus plantarum)).